The sequence spans 85 residues: Large ribosomal subunit protein bL27 (85 aa).

The tract at residues 1–21 is disordered; the sequence is MAHKKGVGSSRNGRDSDGQRL.

It belongs to the bacterial ribosomal protein bL27 family.

The protein is Large ribosomal subunit protein bL27 of Citrifermentans bemidjiense (strain ATCC BAA-1014 / DSM 16622 / JCM 12645 / Bem) (Geobacter bemidjiensis).